Consider the following 161-residue polypeptide: Glycine cleavage system H protein 2 (161 aa).

Positions 34–116 (TVTVGVTDIG…YGEGWIAKLK (83 aa)) constitute a Lipoyl-binding domain. Position 75 is an N6-lipoyllysine (Lys-75).

The protein belongs to the GcvH family. The glycine cleavage system is composed of four proteins: P, T, L and H. The cofactor is (R)-lipoate.

In terms of biological role, the glycine cleavage system catalyzes the degradation of glycine. The H protein shuttles the methylamine group of glycine from the P protein to the T protein. This is Glycine cleavage system H protein 2 from Aquifex aeolicus (strain VF5).